We begin with the raw amino-acid sequence, 293 residues long: Ribosomal protein L11 methyltransferase (293 aa).

The S-adenosyl-L-methionine site is built by Thr-145, Gly-166, Asp-188, and Asn-230.

The protein belongs to the methyltransferase superfamily. PrmA family.

The protein resides in the cytoplasm. It carries out the reaction L-lysyl-[protein] + 3 S-adenosyl-L-methionine = N(6),N(6),N(6)-trimethyl-L-lysyl-[protein] + 3 S-adenosyl-L-homocysteine + 3 H(+). Functionally, methylates ribosomal protein L11. The protein is Ribosomal protein L11 methyltransferase of Actinobacillus pleuropneumoniae serotype 3 (strain JL03).